The following is a 315-amino-acid chain: Microtubule-associated protein Jupiter (315 aa).

The segment covering 1–14 (MISNFDCTDNQASS) has biased composition (polar residues). 2 disordered regions span residues 1 to 37 (MISN…QTPR) and 51 to 89 (EKDN…PGKN). Serine 24 carries the post-translational modification Phosphoserine. Threonine 35 carries the phosphothreonine modification. Residues 62 to 76 (APRRGQKTVDSHSRL) are compositionally biased toward basic and acidic residues. Phosphothreonine is present on residues threonine 81 and threonine 85. Serine 94, serine 122, and serine 133 each carry phosphoserine. 2 disordered regions span residues 116–166 (YNGK…ADDA) and 272–315 (EGNP…SGLW). Residues 120-133 (SGSVSSASSSVSSS) show a composition bias toward low complexity. 2 stretches are compositionally biased toward polar residues: residues 134–148 (TENL…SVFR) and 285–296 (DFTQRQESSNGG).

It belongs to the MAP Jupiter family.

It localises to the nucleus. Its subcellular location is the cytoplasm. It is found in the cytoskeleton. The protein resides in the spindle. Functionally, binds to all microtubule populations. The protein is Microtubule-associated protein Jupiter of Drosophila sechellia (Fruit fly).